The sequence spans 1214 residues: Genome polyprotein (1214 aa).

In terms of domain architecture, SF3 helicase spans 1-55 (NKGKTFTSKYVIMTSNTETPVKPTSRRAGAFYRRVMIVDVTNNAVEKWKSDNPGK). Tyr-428 carries the O-(5'-phospho-RNA)-tyrosine modification. In terms of domain architecture, Peptidase C24 spans 523 to 676 (GVAHKNAIVS…KLIVPYAKVD (154 aa)). Catalysis depends on for 3CLpro activity residues His-557, Glu-578, and Cys-640. Residues 926-1051 (HDRYCVDYSK…IVPPLISSVM (126 aa)) form the RdRp catalytic domain.

Post-translationally, specific enzymatic cleavages in vivo yield mature proteins. Pro-Pol is first autocatalytically cleaved, then processes the whole polyprotein. In terms of processing, VPg is uridylylated by the polymerase and is covalently attached to the 5'-end of the polyadenylated genomic and subgenomic RNAs. This uridylylated form acts as a nucleotide-peptide primer for the polymerase.

The catalysed reaction is a ribonucleoside 5'-triphosphate + H2O = a ribonucleoside 5'-diphosphate + phosphate + H(+). It catalyses the reaction RNA(n) + a ribonucleoside 5'-triphosphate = RNA(n+1) + diphosphate. It carries out the reaction Endopeptidase with a preference for cleavage when the P1 position is occupied by Glu-|-Xaa and the P1' position is occupied by Gly-|-Yaa.. NTPase presumably plays a role in replication. Despite having similarities with helicases, does not seem to display any helicase activity. Functionally, viral genome-linked protein is covalently linked to the 5'-end of the positive-strand, negative-strand genomic RNAs and subgenomic RNA. Acts as a genome-linked replication primer. May recruit ribosome to viral RNA thereby promoting viral proteins translation. In terms of biological role, protease-polymerase p76 processes the polyprotein: Pro-Pol is first released by autocleavage, then all other proteins are cleaved. Cleaves host translation initiation factor eIF4G1 and eIF4G2 thereby inducing a shutdown of host protein synthesis. This shutdown may not prevent viral mRNA from being translated since viral Vpg replaces the cap. May cleave host polyadenylate-binding protein thereby inhibiting cellular translation. It is also an RNA-directed RNA polymerase which replicates genomic and antigenomic viral RNA by recognizing specific signals. Also transcribes a subgenomic mRNA by initiating RNA synthesis internally on antigenomic RNA. This sgRNA codes for structural proteins. Catalyzes the covalent attachment VPg with viral RNAs. This is Genome polyprotein from San Miguel sea lion virus serotype 4 (SMSV-4).